We begin with the raw amino-acid sequence, 368 residues long: Phospho-N-acetylmuramoyl-pentapeptide-transferase (368 aa).

10 helical membrane passes run 2–22, 51–71, 80–100, 116–136, 166–186, 193–213, 234–254, 256–276, 277–297, and 340–360; these read IALI…TPLL, TLGG…SALY, PTWA…LGFI, VGGK…LALI, IVAI…WTNA, LDGL…IIAM, PLDL…FLWY, CNPA…GLFA, ALSI…LFVV, and FWIV…GNWV.

It belongs to the glycosyltransferase 4 family. MraY subfamily. Requires Mg(2+) as cofactor.

The protein localises to the cell membrane. The enzyme catalyses UDP-N-acetyl-alpha-D-muramoyl-L-alanyl-gamma-D-glutamyl-meso-2,6-diaminopimeloyl-D-alanyl-D-alanine + di-trans,octa-cis-undecaprenyl phosphate = di-trans,octa-cis-undecaprenyl diphospho-N-acetyl-alpha-D-muramoyl-L-alanyl-D-glutamyl-meso-2,6-diaminopimeloyl-D-alanyl-D-alanine + UMP. It participates in cell wall biogenesis; peptidoglycan biosynthesis. Catalyzes the initial step of the lipid cycle reactions in the biosynthesis of the cell wall peptidoglycan: transfers peptidoglycan precursor phospho-MurNAc-pentapeptide from UDP-MurNAc-pentapeptide onto the lipid carrier undecaprenyl phosphate, yielding undecaprenyl-pyrophosphoryl-MurNAc-pentapeptide, known as lipid I. The protein is Phospho-N-acetylmuramoyl-pentapeptide-transferase of Bifidobacterium animalis subsp. lactis (strain AD011).